A 336-amino-acid polypeptide reads, in one-letter code: Glyceraldehyde-3-phosphate dehydrogenase (336 aa).

Residues R12–I13, D34, and S120 each bind NAD(+). D-glyceraldehyde 3-phosphate-binding positions include S150 to T152, T181, R198, T211 to G212, and R234. Residue C151 is the Nucleophile of the active site. N316 lines the NAD(+) pocket.

The protein belongs to the glyceraldehyde-3-phosphate dehydrogenase family. Homotetramer.

The protein resides in the cytoplasm. The catalysed reaction is D-glyceraldehyde 3-phosphate + phosphate + NAD(+) = (2R)-3-phospho-glyceroyl phosphate + NADH + H(+). Its pathway is carbohydrate degradation; glycolysis; pyruvate from D-glyceraldehyde 3-phosphate: step 1/5. Its function is as follows. Catalyzes the oxidative phosphorylation of glyceraldehyde 3-phosphate (G3P) to 1,3-bisphosphoglycerate (BPG) using the cofactor NAD. The first reaction step involves the formation of a hemiacetal intermediate between G3P and a cysteine residue, and this hemiacetal intermediate is then oxidized to a thioester, with concomitant reduction of NAD to NADH. The reduced NADH is then exchanged with the second NAD, and the thioester is attacked by a nucleophilic inorganic phosphate to produce BPG. The protein is Glyceraldehyde-3-phosphate dehydrogenase (gapA) of Staphylococcus aureus.